We begin with the raw amino-acid sequence, 112 residues long: UPF0342 protein STH1710 (112 aa).

It belongs to the UPF0342 family.

This Symbiobacterium thermophilum (strain DSM 24528 / JCM 14929 / IAM 14863 / T) protein is UPF0342 protein STH1710.